An 818-amino-acid polypeptide reads, in one-letter code: MKLKRILLSVALLCGIGTTAMADKGMWLLNELNQQNYERMKELGFKLSPEQLYSLGQPSVASAVVIFGGGCTGITVSNEGLIFTNHHCGFGAIQSQSTVDHDYLRDGFRSNNHVEELPIPGLSVRYLREIVDVTPRIEAAVKGAKSEMERMQIIEELSQKINAEYTKGSTVVGEVTPYYAGNKYYVVVYNVFQDVRLVMAPPSSVGKFGGDTDNWMWTRHTGDFSVFRVYADANNNPALYSQNNKPYKPISYAPVSLNGYREGDYAMTIGFPGSTNRYLTSWGVEDVVNNENSPRIEVRGIKQAIWKEAMEADQATRIKYASKYAQSSNYWKNSIGMNRGLKNLDVVNRKRAEEKAFEAWIAKNNSQSTYGHILPGLKADYAKSAAISKDINYLYETLWGGTEIVRLARDVNSVGRIQAADMPKYKGRLEELYKDYLPSLDVKVLPAMLDIVRQRVSADCQPDIFKFIDKKFKGSTEKYAQYVFEKSIVPYADKVKDFLNLPADKQKKILDKDPAVALFNSVLPAIMQAQDKSEEMMLNIEKGKREYFAASRIMDPNRQMPSDANFTMRMSYGSIKGYAPKDGAWYNYYTTEQGVFEKQDPTSSEFAVQPEILSLLRSKDFGQYGVGDHLRLCFLSDNDITGGNSGSPVFNGNGELIGLAFDGNWEAMSGDIEFEPDLQRTISVDIRYVLFMIDKWAKMPHLIKELNLVKGDQRDLMPAGKGGNCSHKKAQTCAKKECSKGKKCAEKSATCISAMKDGKPCKTEKACAAGQKSAEKKANCCSTMKDGKPCTGDKDCAKSGKACCGKNKEAAAKKASKK.

The first 22 residues, 1-22 (MKLKRILLSVALLCGIGTTAMA), serve as a signal peptide directing secretion. Residues histidine 87, aspartate 223, and serine 645 each act as charge relay system in the active site.

This sequence belongs to the peptidase S46 family.

Catalyzes the removal of dipeptides from the N-terminus of oligopeptides. Most efficiently cleaves the synthetic substrate Met-Leu-methylcoumaryl-7-amide (Met-Leu-MCA), and slowly hydrolyzes Leu-Gln-, Lys-Ala-, Leu-Arg, and Ala-Asn-MCA. Is likely involved in amino acid metabolism and bacterial growth/survival of asaccharolytic P.endodontalis, that utilizes amino acids from extracellular proteinaceous nutrients as energy and carbon sources. The chain is Dipeptidyl-peptidase 7 from Porphyromonas endodontalis (strain ATCC 35406 / DSM 24491 / JCM 8526 / CCUG 16442 / BCRC 14492 / NCTC 13058 / HG 370) (Bacteroides endodontalis).